The chain runs to 370 residues: Glutamate 5-kinase (370 aa).

Position 13 (lysine 13) interacts with ATP. The substrate site is built by serine 54, aspartate 140, and asparagine 152. ATP is bound by residues 172-173 and 214-220; these read SD and SGGMVTK. One can recognise a PUA domain in the interval 278–355; the sequence is TGTLVLDAGA…GEIEAILGFR (78 aa).

Belongs to the glutamate 5-kinase family.

Its subcellular location is the cytoplasm. It catalyses the reaction L-glutamate + ATP = L-glutamyl 5-phosphate + ADP. Its pathway is amino-acid biosynthesis; L-proline biosynthesis; L-glutamate 5-semialdehyde from L-glutamate: step 1/2. In terms of biological role, catalyzes the transfer of a phosphate group to glutamate to form L-glutamate 5-phosphate. This is Glutamate 5-kinase from Paramagnetospirillum magneticum (strain ATCC 700264 / AMB-1) (Magnetospirillum magneticum).